Reading from the N-terminus, the 428-residue chain is Histidine--tRNA ligase (428 aa).

This sequence belongs to the class-II aminoacyl-tRNA synthetase family. In terms of assembly, homodimer.

The protein localises to the cytoplasm. The enzyme catalyses tRNA(His) + L-histidine + ATP = L-histidyl-tRNA(His) + AMP + diphosphate + H(+). This chain is Histidine--tRNA ligase, found in Halalkalibacterium halodurans (strain ATCC BAA-125 / DSM 18197 / FERM 7344 / JCM 9153 / C-125) (Bacillus halodurans).